We begin with the raw amino-acid sequence, 98 residues long: ESAT-6-like protein EsxM (98 aa).

Belongs to the WXG100 family. CFP-10 subfamily.

It is found in the secreted. Functionally, alters the host macrophage cytoskeleton and enhances macrophage motility. Promotes granuloma efflux, extrapulmonary dissemination of infection and bone disease. The sequence is that of ESAT-6-like protein EsxM from Mycobacterium marinum (strain ATCC BAA-535 / M).